Consider the following 174-residue polypeptide: Transcription antitermination protein NusB (174 aa).

Residues 1–11 (MSEVETTNDQT) show a composition bias toward polar residues. The disordered stretch occupies residues 1–29 (MSEVETTNDQTPAPKRKDKKPSRSQLRSA).

The protein belongs to the NusB family.

In terms of biological role, involved in transcription antitermination. Required for transcription of ribosomal RNA (rRNA) genes. Binds specifically to the boxA antiterminator sequence of the ribosomal RNA (rrn) operons. The polypeptide is Transcription antitermination protein NusB (Marinomonas sp. (strain MWYL1)).